An 825-amino-acid chain; its full sequence is Zinc finger protein 28 (825 aa).

The tract at residues 26–65 (RPGGGPAAGTVVAPGSPDRGRPRSRNSLASQDQQGAVTSG) is disordered. A compositionally biased stretch (low complexity) spans 33–42 (AGTVVAPGSP). A compositionally biased stretch (polar residues) spans 51–65 (NSLASQDQQGAVTSG). In terms of domain architecture, KRAB spans 103 to 174 (VTFGDVAVVF…KRKMRKGQHL (72 aa)). 14 consecutive C2H2-type zinc fingers follow at residues 377-399 (FQCNECKKTFTQSSSLTVHQRIH), 405-427 (YKCNQCGKAFSDGSSFARHQRCH), 433-456 (YECPECGKAFIQNTSLVRHWRYYH), 462-484 (FDCIDCGKAFSDHIGLNQHRRIH), 490-512 (YTCEVCHKSFRYGSSLTVHQRIH), 518-540 (YECEICRKAFSHHASLTQHQRVH), 546-568 (FKCKECGKAFRQNIHLASHWRIH), 574-596 (FECGECGKSFSISSQLATHQRIH), 602-624 (YECKVCRKAFTQKAHLAQHQKTH), 630-652 (YECKECGKAFSQTTHLIQHQRVH), 658-680 (YKCLECGKAFGDNSSCTQHRRLH), 686-708 (YECVECGKTFKTKSSLICHRRCH), 714-736 (YECSACGKAFSHRQSLSVHQRIH), and 742-764 (YECKECRKTFIQIGHLNQHKRVH). The segment at 770 to 792 (YNYKKGRRAFRQTAHFAHHQQIH) adopts a C2H2-type 15; degenerate zinc-finger fold.

The protein belongs to the krueppel C2H2-type zinc-finger protein family. In terms of tissue distribution, expressed predominantly in ovary.

It localises to the nucleus. May be involved in transcriptional regulation. May have a role in embryonic development. This Mus musculus (Mouse) protein is Zinc finger protein 28 (Zfp28).